A 156-amino-acid chain; its full sequence is Small ribosomal subunit protein uS7 (156 aa).

Belongs to the universal ribosomal protein uS7 family. As to quaternary structure, part of the 30S ribosomal subunit. Contacts proteins S9 and S11.

One of the primary rRNA binding proteins, it binds directly to 16S rRNA where it nucleates assembly of the head domain of the 30S subunit. Is located at the subunit interface close to the decoding center, probably blocks exit of the E-site tRNA. The polypeptide is Small ribosomal subunit protein uS7 (Bartonella tribocorum (strain CIP 105476 / IBS 506)).